We begin with the raw amino-acid sequence, 56 residues long: Small ribosomal subunit protein uS14 (56 aa).

Residue serine 9 is modified to Phosphoserine. Arginine 12 is modified (omega-N-methylarginine). Zn(2+) contacts are provided by cysteine 21, cysteine 24, cysteine 39, and cysteine 42. An N6-acetyllysine modification is found at lysine 48.

It belongs to the universal ribosomal protein uS14 family. As to quaternary structure, component of the 40S small ribosomal subunit. Zn(2+) is required as a cofactor.

The protein localises to the cytoplasm. Its subcellular location is the cytosol. It localises to the rough endoplasmic reticulum. Its function is as follows. Component of the small ribosomal subunit. The ribosome is a large ribonucleoprotein complex responsible for the synthesis of proteins in the cell. This is Small ribosomal subunit protein uS14 (RPS29) from Sus scrofa (Pig).